The following is an 870-amino-acid chain: DNA polymerase kappa (870 aa).

One can recognise a UmuC domain in the interval 103 to 358 (IVHIDMDAFY…LPIRKVSGIG (256 aa)). Residues aspartate 107, aspartate 198, and glutamate 199 each coordinate Mg(2+). 2 UBZ4-type zinc fingers span residues 621 to 651 (ILTCPVCFRAQGCISLEALNKHVDECLDGPS) and 776 to 806 (ALVCPVCNVEQKTSDLTLFNVHVDVCLNKSF). Residues cysteine 624, cysteine 627, histidine 642, cysteine 646, cysteine 779, cysteine 782, histidine 797, and cysteine 801 each contribute to the Zn(2+) site. Positions 816–858 (NPVNQPKESSRSTGSSSGVQKAVTRTKRPGLMTKYSTSKKIKP) are disordered.

The protein belongs to the DNA polymerase type-Y family. In terms of assembly, interacts with REV1. Interacts with PCNA. The cofactor is Mg(2+). Mn(2+) serves as cofactor. In terms of tissue distribution, detected at low levels in testis, spleen, prostate and ovary. Detected at very low levels in kidney, colon, brain, heart, liver, lung, placenta, pancreas and peripheral blood leukocytes.

It localises to the nucleus. The enzyme catalyses DNA(n) + a 2'-deoxyribonucleoside 5'-triphosphate = DNA(n+1) + diphosphate. DNA polymerase specifically involved in DNA repair. Plays an important role in translesion synthesis, where the normal high-fidelity DNA polymerases cannot proceed and DNA synthesis stalls. Depending on the context, it inserts the correct base, but causes frequent base transitions, transversions and frameshifts. Lacks 3'-5' proofreading exonuclease activity. Forms a Schiff base with 5'-deoxyribose phosphate at abasic sites, but does not have lyase activity. In Homo sapiens (Human), this protein is DNA polymerase kappa (POLK).